The sequence spans 181 residues: Probable cobalt-precorrin-6B C(15)-methyltransferase (decarboxylating) (181 aa).

Residues T16, 40 to 44, D61, and A89 contribute to the S-adenosyl-L-methionine site; that span reads GCGSG.

This sequence belongs to the methyltransferase superfamily. Archaeal-type CbiT family.

It catalyses the reaction Co-precorrin-6B + S-adenosyl-L-methionine = Co-precorrin-7 + S-adenosyl-L-homocysteine + CO2. It participates in cofactor biosynthesis; adenosylcobalamin biosynthesis; cob(II)yrinate a,c-diamide from sirohydrochlorin (anaerobic route): step 8/10. Catalyzes the methylation of C-15 in cobalt-precorrin-6B followed by the decarboxylation of C-12 to form cobalt-precorrin-7. The polypeptide is Probable cobalt-precorrin-6B C(15)-methyltransferase (decarboxylating) (Methanococcus maripaludis (strain C7 / ATCC BAA-1331)).